The sequence spans 483 residues: Glutamyl-tRNA(Gln) amidotransferase subunit A (483 aa).

Residues K76 and S151 each act as charge relay system in the active site. Catalysis depends on S175, which acts as the Acyl-ester intermediate.

This sequence belongs to the amidase family. GatA subfamily. Heterotrimer of A, B and C subunits.

The enzyme catalyses L-glutamyl-tRNA(Gln) + L-glutamine + ATP + H2O = L-glutaminyl-tRNA(Gln) + L-glutamate + ADP + phosphate + H(+). Its function is as follows. Allows the formation of correctly charged Gln-tRNA(Gln) through the transamidation of misacylated Glu-tRNA(Gln) in organisms which lack glutaminyl-tRNA synthetase. The reaction takes place in the presence of glutamine and ATP through an activated gamma-phospho-Glu-tRNA(Gln). The chain is Glutamyl-tRNA(Gln) amidotransferase subunit A from Pseudomonas putida (strain ATCC 47054 / DSM 6125 / CFBP 8728 / NCIMB 11950 / KT2440).